A 674-amino-acid chain; its full sequence is Kelch repeat and BTB domain-containing protein 6 (674 aa).

A disordered region spans residues 1-28 (MQSREDAPRSRRLASPRGGKRPKKIHKP). Over residues 10–27 (SRRLASPRGGKRPKKIHK) the composition is skewed to basic residues. The BTB domain maps to 63 to 138 (CDVTIEVVTP…CYTGRVSLSE (76 aa)). Kelch repeat units follow at residues 386 to 435 (AVCI…YLNG), 436 to 484 (YIYI…VIRD), 486 to 523 (LYAL…VFNE), 524 to 564 (EIYC…IIKH), 567 to 616 (KLLL…CLSA), and 642 to 673 (TEWD…RVAP). Residues 631–674 (TEEEEIPSESSTEWDLGGFSEPDSESGSSSSLSDDDFWVRVAPQ) are disordered. The ATG8 interaction motif (AIM) signature appears at 668 to 671 (WVRV).

In terms of assembly, core component of a BCR3 (BTB-CUL3-RBX1) E3 ubiquitin ligase complex, also named Cul3-RING ubiquitin ligase complex CUL3(KBTBD6/7), composed of CUL3, RBX1, KBTBD6 and KBTBD7. Interacts with GABARAP; the interaction is direct and is required for the ubiquitination of TIAM1. Interacts with GABARAPL1, GABARAPL2 and MAP1LC3B; the interaction is direct.

It localises to the cytoplasm. Its subcellular location is the nucleus. Its pathway is protein modification; protein ubiquitination. In terms of biological role, as part of the CUL3(KBTBD6/7) E3 ubiquitin ligase complex functions as a substrate adapter for the RAC1 guanine exchange factor (GEF) TIAM1, mediating its 'Lys-48' ubiquitination and proteasomal degradation. By controlling this ubiquitination, regulates RAC1 signal transduction and downstream biological processes including the organization of the cytoskeleton, cell migration and cell proliferation. Ubiquitination of TIAM1 requires the membrane-associated protein GABARAP which may restrict locally the activity of the complex. This chain is Kelch repeat and BTB domain-containing protein 6, found in Homo sapiens (Human).